The chain runs to 85 residues: DNA-directed RNA polymerase subunit Rpo11 (85 aa).

It belongs to the archaeal Rpo11/eukaryotic RPB11/RPC19 RNA polymerase subunit family. As to quaternary structure, part of the RNA polymerase complex.

The protein localises to the cytoplasm. The enzyme catalyses RNA(n) + a ribonucleoside 5'-triphosphate = RNA(n+1) + diphosphate. Its function is as follows. DNA-dependent RNA polymerase (RNAP) catalyzes the transcription of DNA into RNA using the four ribonucleoside triphosphates as substrates. The protein is DNA-directed RNA polymerase subunit Rpo11 of Methanothermobacter thermautotrophicus (strain ATCC 29096 / DSM 1053 / JCM 10044 / NBRC 100330 / Delta H) (Methanobacterium thermoautotrophicum).